Consider the following 859-residue polypeptide: Auxin response factor 2 (859 aa).

The interval 1–48 is disordered; sequence MASSEVSMKGNRGGDNFSSSGFSDPKETRNVSVAGEGQKSNSTRSAAA. The span at 14-23 shows a compositional bias: low complexity; sequence GDNFSSSGFS. The segment at residues 164 to 266 is a DNA-binding region (TF-B3); the sequence is FCKTLTASDT…ELRVGVRRAM (103 aa). A compositionally biased stretch (pro residues) spans 396-407; it reads LAPPALSPVPMP. Disordered regions lie at residues 396–442, 687–736, and 829–859; these read LAPP…LPAS, IASP…RSCT, and RSEE…AGNS. Composition is skewed to polar residues over residues 416-426 and 695-704; these read IAPSSPDSSML and LSDQSKGSKS. The 85-residue stretch at 733 to 817 folds into the PB1 domain; the sequence is RSCTKVHKQG…RKIFIYTKEE (85 aa). Residues 847-859 show a composition bias toward polar residues; that stretch reads SASNPSLSSAGNS.

It belongs to the ARF family. As to quaternary structure, homodimers and heterodimers. Interacts with ARF1. Expressed in the whole plant.

It is found in the nucleus. Functionally, auxin response factors (ARFs) are transcriptional factors that bind specifically to the DNA sequence 5'-TGTCTC-3' found in the auxin-responsive promoter elements (AuxREs). Could act as transcriptional activator or repressor. Formation of heterodimers with Aux/IAA proteins may alter their ability to modulate early auxin response genes expression. Promotes flowering, stamen development, floral organ abscission and fruit dehiscence. Functions independently of ethylene and cytokinin response pathways. May act as a repressor of cell division and organ growth. The polypeptide is Auxin response factor 2 (ARF2) (Arabidopsis thaliana (Mouse-ear cress)).